We begin with the raw amino-acid sequence, 1150 residues long: MSLKFIYGRSGSGKSYYCFQDIKRKIEENSDKKLILLVPEQFSFQSEKNLINYIGERAVSRAEVLSFKRMAYRVFNEVGGVTHRYMNESGKNMLLYSILNELTGELKIFNNAANKNGFVSTLSDIITEFKRYNLTPEMIKEYLEVAEEREDNILKGKLQDIYLIYSKFQDSIRKKFIDEEENLTILADKLKESKYFDGAYIWVDEFFNFTPQEYLVLEELLLKAEKVNITLCTGGLNEGERIDNLDLFLPVKNTEEKILEFVKRNNIKYEKPIKLNCDPCYRFKNSKELSHMEKNLFAFPYKIHEKYTEDICVFQALNEYSEIEYTARDIIKLVRDNGFRYKDIAVITGDLEGYQSLIKAVFTEYGIPYFIDKKVEGDNNPLVIFILSSLEVLNKNWNYESVFRYLKAGLVDIKREEIDIIENYVLANGIRGKRWIEEKDWDYKILYGFNLTEEKEEEEEEKLKKINEIRRKITEPLIEFHNNIKGEITPKKMCLELYNFLEKMNISSKIESWIKYFKERNRLDKINEYKQIWDVAIGLMEQLVEVMKEEKLNSRTLENIFKSGFEQYELGIIPPSLDQVLVSSTKRLRSHEIKALYIVGTNDGVFPSVLDENGILSDLERENLRETGLEVAKDTKSTAFEEQFLMYVTLTTMSDYLRISYPIANEEGKTLRPSIVISRLRKIFPNLCEKSNVIKEEGDIEKISSPKPTFNEFISQLRVKEEGLELSSIWLSVYDWFMNNKEWKEKFINISQGFNHTNYAEIVDTRRVRKLYGSKLNMSVSRLEKFSQCPFAYFIRYGMNAKERKIYKVSTPDIGTLMHDVVESFSRHIEGKNISWEEIDRELCESFVSTMVDEKIKDMKGSILNSSPRYKHMTNRIKDILSKSMEVISQQISRGDFKPSAYELAFGFNGDFPPISIELSSGEKVNLIGRIDRVDKLENEDGTFIRIIDYKSGKQDFNLSDIYYGLQIQLLVYLDALLQEIEDSAKKEVNPAGILYFNMDDPLISTKKEITKEEAEKEILKKLKLKGLVLKDANIIKAMDNLISGYSDIISVRVNKDGSPSKNSSVADLEDFQLLRDYVRKLIVELCEEMLEGNISIKPYKKNNYTPCGFCDYSAICQFDTSIKGSQYRFINDKKDDEVLQCIREEMKED.

8–15 (GRSGSGKS) is a binding site for ATP. Residues C789, C1108, C1111, and C1117 each coordinate [4Fe-4S] cluster.

This sequence belongs to the helicase family. AddB/RexB type 1 subfamily. Heterodimer of AddA and AddB. Requires Mg(2+) as cofactor. It depends on [4Fe-4S] cluster as a cofactor.

The heterodimer acts as both an ATP-dependent DNA helicase and an ATP-dependent, dual-direction single-stranded exonuclease. Recognizes the chi site generating a DNA molecule suitable for the initiation of homologous recombination. The AddB subunit has 5' -&gt; 3' nuclease activity but not helicase activity. The sequence is that of ATP-dependent helicase/deoxyribonuclease subunit B from Clostridium tetani (strain Massachusetts / E88).